Here is a 1407-residue protein sequence, read N- to C-terminus: DNA-directed RNA polymerase subunit beta' (1407 aa).

Zn(2+) contacts are provided by Cys-70, Cys-72, Cys-85, and Cys-88. 3 residues coordinate Mg(2+): Asp-460, Asp-462, and Asp-464. Residues Cys-814, Cys-888, Cys-895, and Cys-898 each contribute to the Zn(2+) site.

It belongs to the RNA polymerase beta' chain family. The RNAP catalytic core consists of 2 alpha, 1 beta, 1 beta' and 1 omega subunit. When a sigma factor is associated with the core the holoenzyme is formed, which can initiate transcription. It depends on Mg(2+) as a cofactor. Zn(2+) serves as cofactor.

The catalysed reaction is RNA(n) + a ribonucleoside 5'-triphosphate = RNA(n+1) + diphosphate. In terms of biological role, DNA-dependent RNA polymerase catalyzes the transcription of DNA into RNA using the four ribonucleoside triphosphates as substrates. This Salmonella paratyphi B (strain ATCC BAA-1250 / SPB7) protein is DNA-directed RNA polymerase subunit beta'.